A 657-amino-acid polypeptide reads, in one-letter code: MAKETFYITTPIYYPSGNLHIGHAYSTVAGDVIARYKRMQGYDVRYLTGTDEHGQKIQEKAQKAGKTEIEYLDEMIAGIKQLWAKLEISNDDFIRTTEERHKHVVEQVFERLLKQGDIYLGEYEGWYSVPDETYYTESQLVDPQYENGKIIGGKSPDSGHEVELVKEESYFFNISKYTDRLLEFYDQNPDFIQPPSRKNEMINNFIKPGLADLAVSRTSFNWGVHVPSNPKHVVYVWIDALVNYISALGYLSDDESLFNKYWPADIHLMAKEIVRFHSIIWPILLMALDLPLPKKVFAHGWILMKDGKMSKSKGNVVDPNILIDRYGLDATRYYLMRELPFGSDGVFTPEAFVERTNFDLANDLGNLVNRTISMINKYFDGELPAYQGPLHELDEEMEAMALETVKSYTESMESLQFSVALSTVWKFISRTNKYIDETTPWVLAKDDSQKDMLGNVMAHLVENIRYAAVLLRPFLTHAPKEIFEQLNINNPQFMEFSSLEQYGVLTEPIMVTGQPKPIFPRLDSEAEIAYIKESMQPPATEEEKEEIPSKPQIDIKDFDKVEIKAATIIDAEHVKKSDKLLKIQVDLDSEQRQIVSGIAKFYTPDDIIGKKVAVVTNLKPAKLMGQKSEGMILSAEKDGVLTLVSLPSAIPNGAVIK.

Positions 13-23 (YYPSGNLHIGH) match the 'HIGH' region motif. Positions 308 to 312 (KMSKS) match the 'KMSKS' region motif. Residue Lys311 participates in ATP binding. Residues 557 to 657 (DFDKVEIKAA…SAIPNGAVIK (101 aa)) enclose the tRNA-binding domain.

Belongs to the class-I aminoacyl-tRNA synthetase family. MetG type 2B subfamily. As to quaternary structure, homodimer.

The protein localises to the cytoplasm. It catalyses the reaction tRNA(Met) + L-methionine + ATP = L-methionyl-tRNA(Met) + AMP + diphosphate. Its function is as follows. Is required not only for elongation of protein synthesis but also for the initiation of all mRNA translation through initiator tRNA(fMet) aminoacylation. The protein is Methionine--tRNA ligase of Staphylococcus aureus (strain MRSA252).